The primary structure comprises 220 residues: Cytidylate kinase (220 aa).

10–18 (GPASSGKST) provides a ligand contact to ATP.

This sequence belongs to the cytidylate kinase family. Type 1 subfamily.

It is found in the cytoplasm. It catalyses the reaction CMP + ATP = CDP + ADP. The enzyme catalyses dCMP + ATP = dCDP + ADP. This is Cytidylate kinase from Lactococcus lactis subsp. lactis (strain IL1403) (Streptococcus lactis).